The sequence spans 1226 residues: Double-stranded RNA-specific adenosine deaminase (1226 aa).

An Asymmetric dimethylarginine modification is found at arginine 26. The Z-binding 1 domain maps to 133-199 (LSIYQDQEQR…GTPPLWKIAV (67 aa)). The segment at 133-202 (LSIYQDQEQR…PLWKIAVSTQ (70 aa)) is interaction with Z-DNA. Disordered stretches follow at residues 208–238 (SGVV…TSVS) and 258–286 (GVVR…STSA). Position 285 is a phosphoserine (serine 285). Residues 293 to 357 (FLDMAEIKEK…TTPPIWHLTD (65 aa)) enclose the Z-binding 2 domain. Glycyl lysine isopeptide (Lys-Gly) (interchain with G-Cter in SUMO2) cross-links involve residues lysine 384 and lysine 408. Lysine 418 participates in a covalent cross-link: Glycyl lysine isopeptide (Lys-Gly) (interchain with G-Cter in SUMO); alternate. Residue lysine 418 forms a Glycyl lysine isopeptide (Lys-Gly) (interchain with G-Cter in SUMO1); alternate linkage. Residue lysine 418 forms a Glycyl lysine isopeptide (Lys-Gly) (interchain with G-Cter in SUMO2); alternate linkage. Serine 481 carries the phosphoserine modification. In terms of domain architecture, DRBM 1 spans 503-571 (NPISGLLEYA…AMKAMTILLE (69 aa)). Positions 574–597 (KAKDSGKSEESSHYSTEKESEKTA) are enriched in basic and acidic residues. Residues 574–610 (KAKDSGKSEESSHYSTEKESEKTAESQTPTPSATSFF) are disordered. Lysine 580 is covalently cross-linked (Glycyl lysine isopeptide (Lys-Gly) (interchain with G-Cter in SUMO2)). The span at 600 to 610 (QTPTPSATSFF) shows a compositional bias: polar residues. Phosphothreonine occurs at positions 601 and 603. 3 positions are modified to phosphoserine: serine 614, serine 629, and serine 636. The 69-residue stretch at 614–682 (SPVTTLLECM…AEEAMKALHG (69 aa)) folds into the DRBM 2 domain. The tract at residues 716-725 (IGELVRYLNT) is N-terminal extension of DRBM 3 and constituent of a bi-partite nuclear localization signal. Positions 726–794 (NPVGGLLEYA…ADAALRVLIG (69 aa)) constitute a DRBM 3 domain. Residues 795 to 801 (ENEKAER) are C-terminal extension of DRBM 3 and constituent of a bi-partite nuclear localization signal. At threonine 808 the chain carries Phosphothreonine. A phosphoserine mark is found at serine 814, serine 823, and serine 825. Residue lysine 875 forms a Glycyl lysine isopeptide (Lys-Gly) (interchain with G-Cter in SUMO2) linkage. Positions 886-1221 (SLGTGNRCVK…ISKPQEEKNF (336 aa)) constitute an A to I editase domain. Histidine 910 serves as a coordination point for Zn(2+). The active-site Proton donor is glutamate 912. The Zn(2+) site is built by cysteine 966 and cysteine 1036.

Homodimer. Homodimerization is essential for its catalytic activity. Isoform 5 can form heterodimers with ADARB1/ADAR2. Isoform 1 interacts with ILF2/NF45 and ILF3/NF90. Binding to ILF3/NF90 up-regulates ILF3-mediated gene expression. Isoform 1 and isoform 5 (via DRBM 3 domain) interact with TNPO1. Isoform 5 (via DRBM domains) interacts with XPO5. Isoform 1 and isoform 5 can interact with EIF2AK2/PKR and UPF1. In terms of processing, sumoylation reduces RNA-editing activity. In terms of tissue distribution, ubiquitously expressed, highest levels were found in brain and lung. Isoform 5 is expressed at higher levels in astrocytomas as compared to normal brain tissue and expression increases strikingly with the severity of the tumor, being higher in the most aggressive tumors.

The protein resides in the cytoplasm. It localises to the nucleus. Its subcellular location is the nucleolus. It carries out the reaction adenosine in double-stranded RNA + H2O + H(+) = inosine in double-stranded RNA + NH4(+). Its function is as follows. Catalyzes the hydrolytic deamination of adenosine to inosine in double-stranded RNA (dsRNA) referred to as A-to-I RNA editing. This may affect gene expression and function in a number of ways that include mRNA translation by changing codons and hence the amino acid sequence of proteins since the translational machinery read the inosine as a guanosine; pre-mRNA splicing by altering splice site recognition sequences; RNA stability by changing sequences involved in nuclease recognition; genetic stability in the case of RNA virus genomes by changing sequences during viral RNA replication; and RNA structure-dependent activities such as microRNA production or targeting or protein-RNA interactions. Can edit both viral and cellular RNAs and can edit RNAs at multiple sites (hyper-editing) or at specific sites (site-specific editing). Its cellular RNA substrates include: bladder cancer-associated protein (BLCAP), neurotransmitter receptors for glutamate (GRIA2) and serotonin (HTR2C) and GABA receptor (GABRA3). Site-specific RNA editing of transcripts encoding these proteins results in amino acid substitutions which consequently alters their functional activities. Exhibits low-level editing at the GRIA2 Q/R site, but edits efficiently at the R/G site and HOTSPOT1. Its viral RNA substrates include: hepatitis C virus (HCV), vesicular stomatitis virus (VSV), measles virus (MV), hepatitis delta virus (HDV), and human immunodeficiency virus type 1 (HIV-1). Exhibits either a proviral (HDV, MV, VSV and HIV-1) or an antiviral effect (HCV) and this can be editing-dependent (HDV and HCV), editing-independent (VSV and MV) or both (HIV-1). Impairs HCV replication via RNA editing at multiple sites. Enhances the replication of MV, VSV and HIV-1 through an editing-independent mechanism via suppression of EIF2AK2/PKR activation and function. Stimulates both the release and infectivity of HIV-1 viral particles by an editing-dependent mechanism where it associates with viral RNAs and edits adenosines in the 5'UTR and the Rev and Tat coding sequence. Can enhance viral replication of HDV via A-to-I editing at a site designated as amber/W, thereby changing an UAG amber stop codon to an UIG tryptophan (W) codon that permits synthesis of the large delta antigen (L-HDAg) which has a key role in the assembly of viral particles. However, high levels of ADAR1 inhibit HDV replication. This is Double-stranded RNA-specific adenosine deaminase (ADAR) from Homo sapiens (Human).